Reading from the N-terminus, the 230-residue chain is uncharacterized protein (230 aa).

A disordered region spans residues 1–57 (MPGPHSPNPGVGTNGPAPYPEPSSHEPQALDYPHDLGAAEPAFAPGPADDAALPPAA). A compositionally biased stretch (low complexity) spans 38–55 (AAEPAFAPGPADDAALPP). Residues 75–95 (LLIGIVVALALVSAMTAAIIY) traverse the membrane as a helical segment.

It localises to the membrane. This is an uncharacterized protein from Mycobacterium tuberculosis (strain CDC 1551 / Oshkosh).